The sequence spans 467 residues: AT-rich interactive domain-containing protein cfi-1 (467 aa).

The interval 1-56 is disordered; it reads MSVRIDEPQLFVSMSKEPTQETVNVGGHHDDSSSNCDERVDDQTEEQKSPPASPDL. Residues 27–48 are compositionally biased toward basic and acidic residues; sequence GHHDDSSSNCDERVDDQTEEQK. In terms of domain architecture, ARID spans 181–273; that stretch reads DVKRKEWLDD…YLYDYECEKE (93 aa). An REKLES domain is found at 356-464; sequence AILEAHQRNL…GVLFALDETV (109 aa). Residues 383-441 form a disordered region; it reads LTACSNGNGGNIHNSGRESTSSNDSDIPAKRPKLENDVKTNGASSMRISTKHSDNSKTS. A compositionally biased stretch (basic and acidic residues) spans 409–420; that stretch reads IPAKRPKLENDV. Polar residues predominate over residues 421–430; the sequence is KTNGASSMRI.

As to expression, present in IL2 and URA neurons, and in AVD and PVC interneurons. Present in muscles from head and pharynx (at protein level).

It is found in the nucleus. In terms of biological role, transcription factor. Regulates neuronal subtype identity. Involved in motor neuron fate determination and maintenance, acting as a transcriptional repressor to counteract gene activation by transcription factor unc-3 in a subset of motor neurons. Probably acts by binding to specific promoter elements. Promotes differentiation of URA sensory neurons and prevents them from expressing male-specific CEM neuronal features. Promotes differentiation of AVD and PVC interneurons and their glutamate receptor expression. The protein is AT-rich interactive domain-containing protein cfi-1 (cfi-1) of Caenorhabditis elegans.